The following is a 293-amino-acid chain: ATP synthase subunit gamma, mitochondrial (293 aa).

A mitochondrion-targeting transit peptide spans 1-21 (MFALRTAARPAARSVGATRNY).

F-type ATP synthases have 2 components, the catalytic core F(1) and the membrane-embedded component F(0), linked together by a central stalk and a peripheral stalk. The central stalk, also called rotor shaft, is often seen as part of F(1). The peripheral stalk is seen as part of F(0). F(0) contains the membrane channel next to the rotor. F-type ATP synthases form dimers but each monomer functions independently in ATP generation. The dimer consists of 17 different polypeptides: ATP1 (subunit alpha, 3 molecules per monomer, part of F(1)), ATP2 (subunit beta, 3 copies per monomer, part of F(1)), ATP3 (subunit gamma, part of the central stalk), ATP4 (subunit b, part of the peripheral stalk), ATP5/OSCP (subunit 5/OSCP, part of the peripheral stalk), ATP6 (subunit a, part of the peripheral stalk), ATP7 (subunit d, part of the peripheral stalk), ATP8 (subunit 8, part of the peripheral stalk), OLI1 (subunit c, part of the rotor, 10 molecules per monomer), ATP14 (subunit h, part of the peripheral stalk), ATP15 (subunit epsilon, part of the central stalk), ATP16 (subunit delta, part of the central stalk), ATP17 (subunit f, part of the peripheral stalk), ATP18 (subunit i/j, part of the peripheral stalk), ATP19 (subunit k, dimer-specific, at interface between monomers), ATP20 (subunit g, at interface between monomers), TIM11 (subunit e, at interface between monomers).

The protein localises to the mitochondrion inner membrane. In terms of biological role, mitochondrial membrane ATP synthase (F(1)F(0) ATP synthase or Complex V) produces ATP from ADP in the presence of a proton gradient across the membrane which is generated by electron transport complexes of the respiratory chain. F-type ATP synthases consist of two structural domains, F(1) - containing the extramembraneous catalytic core, and F(0) - containing the membrane proton channel, linked together by a central stalk and a peripheral stalk. During catalysis, ATP synthesis in the catalytic domain of F(1) is coupled via a rotary mechanism of the central stalk subunits to proton translocation. Part of the complex F(1) domain and the central stalk which is part of the complex rotary element. The gamma/ATP3 subunit protrudes into the catalytic domain formed of alpha/ATP1(3)beta/ATP2(3). Rotation of the central stalk against the surrounding alpha/ATP1(3)beta/ATP2(3) subunits leads to hydrolysis of ATP in three separate catalytic sites on the beta/ATP2 subunits. The protein is ATP synthase subunit gamma, mitochondrial of Yarrowia lipolytica (strain CLIB 122 / E 150) (Yeast).